A 299-amino-acid polypeptide reads, in one-letter code: Probable lipid kinase YegS (299 aa).

One can recognise a DAGKc domain in the interval 2–133 (ANFPASLLIL…IDMARVNDKT (132 aa)). Residues Thr-40, 66 to 72 (GDGTINE), and Thr-95 contribute to the ATP site. Residues Leu-215, Asp-218, and Leu-220 each contribute to the Mg(2+) site. The active-site Proton acceptor is the Glu-271.

It belongs to the diacylglycerol/lipid kinase family. YegS lipid kinase subfamily. Requires Mg(2+) as cofactor. Ca(2+) serves as cofactor.

The protein resides in the cytoplasm. In terms of biological role, probably phosphorylates lipids; the in vivo substrate is unknown. The polypeptide is Probable lipid kinase YegS (Salmonella newport (strain SL254)).